The sequence spans 179 residues: Large ribosomal subunit protein uL6 (179 aa).

This sequence belongs to the universal ribosomal protein uL6 family. As to quaternary structure, part of the 50S ribosomal subunit.

In terms of biological role, this protein binds to the 23S rRNA, and is important in its secondary structure. It is located near the subunit interface in the base of the L7/L12 stalk, and near the tRNA binding site of the peptidyltransferase center. The protein is Large ribosomal subunit protein uL6 of Syntrophobacter fumaroxidans (strain DSM 10017 / MPOB).